The chain runs to 369 residues: Mycofactocin maturase MftC (369 aa).

The Radical SAM core domain occupies 16–232 (LDAPICLTWE…KGERVLTGDS (217 aa)). 11 residues coordinate [4Fe-4S] cluster: cysteine 30, cysteine 34, cysteine 37, cysteine 251, cysteine 258, cysteine 269, cysteine 310, cysteine 313, cysteine 319, cysteine 323, and cysteine 341. The segment at 347-369 (APALAQERHAPRPRVDHSRGSRE) is disordered. Basic and acidic residues predominate over residues 352-369 (QERHAPRPRVDHSRGSRE).

This sequence belongs to the radical SAM superfamily. MftC family. As to quaternary structure, interacts with MftB. It depends on [4Fe-4S] cluster as a cofactor.

It catalyses the reaction [mycofactocin precursor peptide]-C-terminal glycyl-L-valyl-L-tyrosine + S-adenosyl-L-methionine = [mycofactocin precursor peptide]-C-terminal glycyl-N-{[2-(4-hydroxyphenyl)ethenyl]-3-methylbutanamide} + 5'-deoxyadenosine + L-methionine + CO2. It carries out the reaction [mycofactocin precursor peptide]-C-terminal glycyl-N-{[2-(4-hydroxyphenyl)ethenyl]-3-methylbutanamide} + AH2 + S-adenosyl-L-methionine = [mycofactocin precursor peptide]-C-terminal glycyl-N-{5-[(4-hydroxyphenyl)methyl]-4,4-dimethyl-2-oxopyrrolidin-3-yl}acetamide + 5'-deoxyadenosine + L-methionine + A + H(+). Its function is as follows. Radical S-adenosylmethionine (SAM) enzyme responsible for the first step of the biosynthesis of the enzyme cofactor mycofactocin (MFT). Catalyzes two reactions at the C-terminus of the mycofactocin precursor (the MftA peptide). The first one is the oxidative decarboxylation of the C-terminal L-tyrosine of MftA, forming an unsaturated tyramine moiety. The second reaction is the cross-linking of the tyramine with the penultimate L-valine residue, forming a five-membered lactam ring. Its activity requires the presence of the MftB chaperone. The polypeptide is Mycofactocin maturase MftC (Mycobacterium ulcerans (strain Agy99)).